Here is a 961-residue protein sequence, read N- to C-terminus: ATPase 7, plasma membrane-type (961 aa).

The Cytoplasmic segment spans residues methionine 1–phenylalanine 64. The helical transmembrane segment at leucine 65 to isoleucine 84 threads the bilayer. Over glycine 85–tyrosine 96 the chain is Extracellular. Residues histidine 97–glutamate 117 form a helical membrane-spanning segment. Topologically, residues asparagine 118 to isoleucine 246 are cytoplasmic. A helical transmembrane segment spans residues glycine 247–glycine 267. Residues leucine 268–glycine 276 are Extracellular-facing. A helical transmembrane segment spans residues isoleucine 277–threonine 294. The Cytoplasmic segment spans residues valine 295–lysine 643. Aspartate 332 functions as the 4-aspartylphosphate intermediate in the catalytic mechanism. Positions 588 and 592 each coordinate Mg(2+). A helical membrane pass occupies residues asparagine 644 to valine 665. Residues phenylalanine 666 to aspartate 670 lie on the Extracellular side of the membrane. The helical transmembrane segment at phenylalanine 671–aspartate 693 threads the bilayer. The Cytoplasmic portion of the chain corresponds to arginine 694–isoleucine 709. Residues phenylalanine 710–alanine 730 traverse the membrane as a helical segment. The Extracellular portion of the chain corresponds to alanine 731–glutamate 764. Residues glutamine 765–threonine 785 traverse the membrane as a helical segment. Over arginine 786 to glycine 797 the chain is Cytoplasmic. Residues phenylalanine 798–alanine 818 traverse the membrane as a helical segment. Over asparagine 819–arginine 826 the chain is Extracellular. The chain crosses the membrane as a helical span at residues serine 827–leucine 847. Residues aspartate 848–isoleucine 961 lie on the Cytoplasmic side of the membrane. A Phosphothreonine modification is found at threonine 894. A phosphoserine mark is found at serine 910 and serine 942. The interval tyrosine 959–isoleucine 961 is interaction with 14-3-3 proteins. Threonine 960 carries the phosphothreonine modification.

The protein belongs to the cation transport ATPase (P-type) (TC 3.A.3) family. Type IIIA subfamily. As to quaternary structure, binds to 14-3-3 proteins. The binding is induced by phosphorylation of Thr-960. Binding to 14-3-3 proteins activates the H(+)-ATPase. Expressed in guard cells, roots and leaves, and barely in mesophyll cells.

It is found in the membrane. It carries out the reaction ATP + H2O + H(+)(in) = ADP + phosphate + 2 H(+)(out). Its function is as follows. The plasma membrane H(+) ATPase of plants and fungi generates a proton gradient that drives the active transport of nutrients by H(+)-symport. The resulting external acidification and/or internal alkinization may mediate growth responses. The polypeptide is ATPase 7, plasma membrane-type (AHA7) (Arabidopsis thaliana (Mouse-ear cress)).